The sequence spans 166 residues: Large ribosomal subunit protein uL10 (166 aa).

This sequence belongs to the universal ribosomal protein uL10 family. As to quaternary structure, part of the ribosomal stalk of the 50S ribosomal subunit. The N-terminus interacts with L11 and the large rRNA to form the base of the stalk. The C-terminus forms an elongated spine to which L12 dimers bind in a sequential fashion forming a multimeric L10(L12)X complex.

Functionally, forms part of the ribosomal stalk, playing a central role in the interaction of the ribosome with GTP-bound translation factors. This is Large ribosomal subunit protein uL10 from Staphylococcus haemolyticus (strain JCSC1435).